The primary structure comprises 221 residues: Oxaloacetate tautomerase FAHD1, mitochondrial (221 aa).

A mitochondrion-targeting transit peptide spans 1–24 (MASTKPLSRFWEWGKNIVCVGRNY). At Ser37 the chain carries Phosphoserine. Mg(2+) contacts are provided by Glu68, Glu70, and Asp99. Lys110 carries the post-translational modification N6-acetyllysine. The residue at position 112 (Lys112) is an N6-succinyllysine.

The protein belongs to the FAH family. In terms of assembly, homodimer. It depends on Mg(2+) as a cofactor. Requires Mn(2+) as cofactor.

It localises to the mitochondrion. The protein localises to the cytoplasm. The protein resides in the cytosol. It carries out the reaction oxaloacetate = enol-oxaloacetate. The enzyme catalyses oxaloacetate + H(+) = pyruvate + CO2. It catalyses the reaction a 3-acylpyruvate + H2O = a carboxylate + pyruvate + H(+). The catalysed reaction is acetylpyruvate + H2O = acetate + pyruvate + H(+). It carries out the reaction 3-fumarylpyruvate + H2O = fumarate + pyruvate + H(+). With respect to regulation, oxaloacetate decarboxylation is competitively inhibited by oxalate. Its function is as follows. Tautomerase that converts enol-oxaloacetate, a strong inhibitor of succinate dehydrogenase, to the physiological keto form of oxaloacetate. It is thereby required to maximize aerobic respiration efficiency by preventing succinate dehydrogenase inhibition. Also acts as a weak oxaloacetate decarboxylase (ODx), catalyzing the decarboxylation of oxaloacetate (OAA) to pyruvate and CO(2), and as such is likely a regulatory enzyme in the TCA cycle. Also displays acylpyruvase activity, being able to hydrolyze acetylpyruvate and fumarylpyruvate in vitro. The sequence is that of Oxaloacetate tautomerase FAHD1, mitochondrial from Rattus norvegicus (Rat).